Reading from the N-terminus, the 138-residue chain is Large ribosomal subunit protein uL16 (138 aa).

The segment covering 1-17 (MLIPRKVKHRKQHHPRQ) has biased composition (basic residues). Residues 1-22 (MLIPRKVKHRKQHHPRQRGIAS) form a disordered region.

It belongs to the universal ribosomal protein uL16 family. In terms of assembly, part of the 50S ribosomal subunit.

Functionally, binds 23S rRNA and is also seen to make contacts with the A and possibly P site tRNAs. The polypeptide is Large ribosomal subunit protein uL16 (Mycobacterium leprae (strain Br4923)).